Consider the following 697-residue polypeptide: Elongation factor G 2 (697 aa).

The tr-type G domain occupies 5–280 (SKYRNIGIFA…AVVDYLPAPD (276 aa)). GTP-binding positions include 14–21 (AHVDAGKT), 78–82 (DTPGH), and 132–135 (NKLD).

This sequence belongs to the TRAFAC class translation factor GTPase superfamily. Classic translation factor GTPase family. EF-G/EF-2 subfamily.

It localises to the cytoplasm. Catalyzes the GTP-dependent ribosomal translocation step during translation elongation. During this step, the ribosome changes from the pre-translocational (PRE) to the post-translocational (POST) state as the newly formed A-site-bound peptidyl-tRNA and P-site-bound deacylated tRNA move to the P and E sites, respectively. Catalyzes the coordinated movement of the two tRNA molecules, the mRNA and conformational changes in the ribosome. The sequence is that of Elongation factor G 2 (fusB) from Shewanella oneidensis (strain ATCC 700550 / JCM 31522 / CIP 106686 / LMG 19005 / NCIMB 14063 / MR-1).